A 796-amino-acid chain; its full sequence is Merozoite surface protein P92 (796 aa).

Residues 1–26 (MFAVNLKICIFLSLVSFLLQCKNTLA) form the signal peptide. N-linked (GlcNAc...) asparagine glycosylation is found at N27, N37, N65, N71, N168, N240, N275, N359, N502, N511, N607, N633, N728, and N765. The 150-residue stretch at 571–720 (KYEGIDLTDS…NSIKQEINKK (150 aa)) folds into the 6-Cys domain. Disulfide bonds link C614/C691 and C625/C689.

In terms of assembly, interacts with host complement factor CFH isoform 1 (via sushi 4-6 domains) and CFH isoform FHL-1 (via sushi 4-6 domains); this interaction recruits CFH onto the merozoite surface preventing complement-mediated cell lysis. The interaction does not affect CFH activity.

It is found in the cell surface. Its subcellular location is the cell membrane. Functionally, during the asexual blood stage, recruits host complement factor H CFH to the surface of merozoites resulting in the down-regulation of the host complement alternative pathway and thus, protecting merozoites from complement-mediated lysis. This chain is Merozoite surface protein P92, found in Plasmodium falciparum (isolate 3D7).